Here is a 399-residue protein sequence, read N- to C-terminus: Probable dual-specificity RNA methyltransferase RlmN (399 aa).

E97 serves as the catalytic Proton acceptor. One can recognise a Radical SAM core domain in the interval 103-381 (YPDRATVCVS…CTVRVERGVS (279 aa)). A disulfide bond links C110 and C386. The [4Fe-4S] cluster site is built by C117, C121, and C124. S-adenosyl-L-methionine contacts are provided by residues 203-204 (GE), S235, 258-260 (SLH), and N343. The active-site S-methylcysteine intermediate is C386.

It belongs to the radical SAM superfamily. RlmN family. The cofactor is [4Fe-4S] cluster.

It is found in the cytoplasm. It carries out the reaction adenosine(2503) in 23S rRNA + 2 reduced [2Fe-2S]-[ferredoxin] + 2 S-adenosyl-L-methionine = 2-methyladenosine(2503) in 23S rRNA + 5'-deoxyadenosine + L-methionine + 2 oxidized [2Fe-2S]-[ferredoxin] + S-adenosyl-L-homocysteine. The enzyme catalyses adenosine(37) in tRNA + 2 reduced [2Fe-2S]-[ferredoxin] + 2 S-adenosyl-L-methionine = 2-methyladenosine(37) in tRNA + 5'-deoxyadenosine + L-methionine + 2 oxidized [2Fe-2S]-[ferredoxin] + S-adenosyl-L-homocysteine. Its function is as follows. Specifically methylates position 2 of adenine 2503 in 23S rRNA and position 2 of adenine 37 in tRNAs. The protein is Probable dual-specificity RNA methyltransferase RlmN of Roseiflexus sp. (strain RS-1).